Consider the following 540-residue polypeptide: Phosphoenolpyruvate carboxykinase (ATP) (540 aa).

R65 lines the substrate pocket. K87 is modified (N6-acetyllysine). The substrate site is built by Y207 and K213. Residues K213, H232, and 248–256 (GLSGTGKTT) contribute to the ATP site. Mn(2+) is bound by residues K213 and H232. D269 provides a ligand contact to Mn(2+). Residues E297, R333, 449–450 (RI), and T455 contribute to the ATP site. R333 provides a ligand contact to substrate. At K523 the chain carries N6-acetyllysine.

Belongs to the phosphoenolpyruvate carboxykinase (ATP) family. Monomer. The cofactor is Mn(2+).

Its subcellular location is the cytoplasm. It carries out the reaction oxaloacetate + ATP = phosphoenolpyruvate + ADP + CO2. Its pathway is carbohydrate biosynthesis; gluconeogenesis. Involved in the gluconeogenesis. Catalyzes the conversion of oxaloacetate (OAA) to phosphoenolpyruvate (PEP) through direct phosphoryl transfer between the nucleoside triphosphate and OAA. This is Phosphoenolpyruvate carboxykinase (ATP) from Escherichia coli O6:K15:H31 (strain 536 / UPEC).